A 165-amino-acid chain; its full sequence is Small ribosomal subunit protein uS5 (165 aa).

Residues 10 to 73 form the S5 DRBM domain; the sequence is LVEKLVAVDR…EAARRNMITV (64 aa).

Belongs to the universal ribosomal protein uS5 family. Part of the 30S ribosomal subunit. Contacts proteins S4 and S8.

In terms of biological role, with S4 and S12 plays an important role in translational accuracy. Located at the back of the 30S subunit body where it stabilizes the conformation of the head with respect to the body. This is Small ribosomal subunit protein uS5 from Acinetobacter baylyi (strain ATCC 33305 / BD413 / ADP1).